The sequence spans 383 residues: S-adenosylmethionine synthase (383 aa).

His-22 is an ATP binding site. Position 24 (Asp-24) interacts with Mg(2+). Glu-50 lines the K(+) pocket. The L-methionine site is built by Glu-63 and Gln-99. A flexible loop region spans residues 99-109 (QSSEINQAVQS). Residues 160 to 162 (DMK), Asp-235, 241 to 242 (RK), Ser-258, and Lys-262 contribute to the ATP site. An L-methionine-binding site is contributed by Asp-235. Lys-266 contacts L-methionine.

It belongs to the AdoMet synthase family. In terms of assembly, homotetramer; dimer of dimers. The cofactor is Mg(2+). Requires K(+) as cofactor.

Its subcellular location is the cytoplasm. It catalyses the reaction L-methionine + ATP + H2O = S-adenosyl-L-methionine + phosphate + diphosphate. The protein operates within amino-acid biosynthesis; S-adenosyl-L-methionine biosynthesis; S-adenosyl-L-methionine from L-methionine: step 1/1. Its function is as follows. Catalyzes the formation of S-adenosylmethionine (AdoMet) from methionine and ATP. The overall synthetic reaction is composed of two sequential steps, AdoMet formation and the subsequent tripolyphosphate hydrolysis which occurs prior to release of AdoMet from the enzyme. In Mycoplasma pneumoniae (strain ATCC 29342 / M129 / Subtype 1) (Mycoplasmoides pneumoniae), this protein is S-adenosylmethionine synthase.